Reading from the N-terminus, the 387-residue chain is Early growth response protein 3 (387 aa).

The interval 241 to 283 (PGFGSLPQPPLTLKPIRPRKYPNRPSKTPLHERPHACPAEGCD) is disordered. A compositionally biased stretch (basic and acidic residues) spans 269-283 (PLHERPHACPAEGCD). C2H2-type zinc fingers lie at residues 275–299 (HACP…LRIH), 305–327 (FQCR…IRTH), and 333–355 (FACE…AKIH). Residues 348 to 387 (RKRHAKIHLKQKEKKSEKGGAPSASSAPTVSLAPVVTTCA) are disordered. Basic residues predominate over residues 350-360 (RHAKIHLKQKE).

It belongs to the EGR C2H2-type zinc-finger protein family.

The protein resides in the nucleus. Probable transcription factor involved in muscle spindle development. The sequence is that of Early growth response protein 3 (Egr3) from Mus musculus (Mouse).